We begin with the raw amino-acid sequence, 216 residues long: uncharacterized protein (216 aa).

The chain crosses the membrane as a helical span at residues 1 to 21 (MTIVHFVGSLFFFFFFSYIFF).

It is found in the membrane. This is an uncharacterized protein from Saccharomyces cerevisiae (strain ATCC 204508 / S288c) (Baker's yeast).